The following is a 269-amino-acid chain: Cytochrome c oxidase subunit 3 (269 aa).

7 helical membrane passes run 21-41 (PWPI…ALAM), 45-65 (IGNM…ATLW), 90-110 (GFLL…WAYF), 138-160 (PLLN…HALI), 167-187 (ALSG…CQYI), 205-225 (FYAG…MLAI), and 247-267 (VIYL…FYWW).

It belongs to the cytochrome c oxidase subunit 3 family. In terms of assembly, component of the cytochrome c oxidase (complex IV, CIV), a multisubunit enzyme composed of a catalytic core of 3 subunits and several supernumerary subunits. The complex exists as a monomer or a dimer and forms supercomplexes (SCs) in the inner mitochondrial membrane with ubiquinol-cytochrome c oxidoreductase (cytochrome b-c1 complex, complex III, CIII).

It localises to the mitochondrion inner membrane. The enzyme catalyses 4 Fe(II)-[cytochrome c] + O2 + 8 H(+)(in) = 4 Fe(III)-[cytochrome c] + 2 H2O + 4 H(+)(out). In terms of biological role, component of the cytochrome c oxidase, the last enzyme in the mitochondrial electron transport chain which drives oxidative phosphorylation. The respiratory chain contains 3 multisubunit complexes succinate dehydrogenase (complex II, CII), ubiquinol-cytochrome c oxidoreductase (cytochrome b-c1 complex, complex III, CIII) and cytochrome c oxidase (complex IV, CIV), that cooperate to transfer electrons derived from NADH and succinate to molecular oxygen, creating an electrochemical gradient over the inner membrane that drives transmembrane transport and the ATP synthase. Cytochrome c oxidase is the component of the respiratory chain that catalyzes the reduction of oxygen to water. Electrons originating from reduced cytochrome c in the intermembrane space (IMS) are transferred via the dinuclear copper A center (CU(A)) of subunit 2 and heme A of subunit 1 to the active site in subunit 1, a binuclear center (BNC) formed by heme A3 and copper B (CU(B)). The BNC reduces molecular oxygen to 2 water molecules using 4 electrons from cytochrome c in the IMS and 4 protons from the mitochondrial matrix. The polypeptide is Cytochrome c oxidase subunit 3 (COX3) (Lachancea kluyveri (strain ATCC 58438 / CBS 3082 / BCRC 21498 / NBRC 1685 / JCM 7257 / NCYC 543 / NRRL Y-12651) (Yeast)).